The chain runs to 63 residues: MLGHSIRRFTTSVVRRSHYEEGPGKNLPFSVKNKWALLVKMSLYFGSAFATPFLIVRHQLLKQ.

Residues 1-16 (MLGHSIRRFTTSVVRR) constitute a mitochondrion transit peptide. At 17–33 (SHYEEGPGKNLPFSVKN) the chain is on the mitochondrial matrix side. Lys-25 carries the post-translational modification N6-acetyllysine; alternate. Lys-25 carries the N6-succinyllysine; alternate modification. The helical transmembrane segment at 34-60 (KWALLVKMSLYFGSAFATPFLIVRHQL) threads the bilayer. Residues 61–63 (LKQ) are Mitochondrial intermembrane-facing.

This sequence belongs to the cytochrome c oxidase VIIc family. As to quaternary structure, component of the cytochrome c oxidase (complex IV, CIV), a multisubunit enzyme composed of 14 subunits. The complex is composed of a catalytic core of 3 subunits MT-CO1, MT-CO2 and MT-CO3, encoded in the mitochondrial DNA, and 11 supernumerary subunits COX4I, COX5A, COX5B, COX6A, COX6B, COX6C, COX7A, COX7B, COX7C, COX8 and NDUFA4, which are encoded in the nuclear genome. The complex exists as a monomer or a dimer and forms supercomplexes (SCs) in the inner mitochondrial membrane with NADH-ubiquinone oxidoreductase (complex I, CI) and ubiquinol-cytochrome c oxidoreductase (cytochrome b-c1 complex, complex III, CIII), resulting in different assemblies (supercomplex SCI(1)III(2)IV(1) and megacomplex MCI(2)III(2)IV(2)). Interacts with RAB5IF.

The protein localises to the mitochondrion inner membrane. It participates in energy metabolism; oxidative phosphorylation. Functionally, component of the cytochrome c oxidase, the last enzyme in the mitochondrial electron transport chain which drives oxidative phosphorylation. The respiratory chain contains 3 multisubunit complexes succinate dehydrogenase (complex II, CII), ubiquinol-cytochrome c oxidoreductase (cytochrome b-c1 complex, complex III, CIII) and cytochrome c oxidase (complex IV, CIV), that cooperate to transfer electrons derived from NADH and succinate to molecular oxygen, creating an electrochemical gradient over the inner membrane that drives transmembrane transport and the ATP synthase. Cytochrome c oxidase is the component of the respiratory chain that catalyzes the reduction of oxygen to water. Electrons originating from reduced cytochrome c in the intermembrane space (IMS) are transferred via the dinuclear copper A center (CU(A)) of subunit 2 and heme A of subunit 1 to the active site in subunit 1, a binuclear center (BNC) formed by heme A3 and copper B (CU(B)). The BNC reduces molecular oxygen to 2 water molecules using 4 electrons from cytochrome c in the IMS and 4 protons from the mitochondrial matrix. The sequence is that of Cytochrome c oxidase subunit 7C, mitochondrial (COX7C) from Papio hamadryas (Hamadryas baboon).